We begin with the raw amino-acid sequence, 294 residues long: Beta-lactamase SME-1 (294 aa).

Positions 1-27 (MSNKVNFKTASFLFSVCLALSAFNAHA) are cleaved as a signal peptide. C72 and C242 are disulfide-bonded. S73 serves as the catalytic Nucleophile; acyl-ester intermediate. Residues S73, K76, S133, and N135 each contribute to the a beta-lactam site. E172 serves as the catalytic Proton acceptor. Residue T239 coordinates a beta-lactam.

It belongs to the class-A beta-lactamase family.

It catalyses the reaction a beta-lactam + H2O = a substituted beta-amino acid. Its activity is regulated as follows. Partially inhibited by the beta-lactamase-blocking agents, clavulanic acid and tazobactam. Not inhibited by EDTA. Its function is as follows. Class A beta-lactamase which confers resistance to the beta-lactam antibiotics, including penicillins, some cephalosporins and carbapenems, to JM109 strain E.coli. Acts via hydrolysis of the beta-lactam ring. Has penicillin-, cephalosporin- and carbapenem-hydrolyzing activities. The polypeptide is Beta-lactamase SME-1 (Serratia marcescens).